We begin with the raw amino-acid sequence, 175 residues long: MDIAIHHPWIRRPFFPFHSPSRLFDQFFGEHLLESDLFPTSTSLSPFYLRPPSFLRAPSWIDTGLSEMRLEKDRFSVNLDVKHFSPEELKVKVLGDVIEVHGKHEERQDEHGFISREFHRKYRIPADVDPLTITSSLSSDGVLTVNGPRKQAPGPERTIPITREEKPAVTAAPKK.

Methionine 1 carries the post-translational modification N-acetylmethionine. The residue at position 19 (serine 19) is a Phosphoserine. Serine 41 is a glycosylation site (O-linked (GlcNAc) serine). Phosphoserine occurs at positions 45 and 59. Residues 56–164 (RAPSWIDTGL…PERTIPITRE (109 aa)) form the sHSP domain. Histidine 83 is a binding site for Zn(2+). At lysine 92 the chain carries N6-acetyllysine. Residues histidine 104, glutamate 106, histidine 111, and histidine 119 each contribute to the Zn(2+) site. The disordered stretch occupies residues 142 to 175 (VLTVNGPRKQAPGPERTIPITREEKPAVTAAPKK). Lysine 166 is modified (N6-acetyllysine). O-linked (GlcNAc) threonine glycosylation occurs at threonine 170.

The protein belongs to the small heat shock protein (HSP20) family. As to quaternary structure, heteromer composed of three CRYAA and one CRYAB subunits. Aggregates with homologous proteins, including the small heat shock protein HSPB1, to form large heteromeric complexes. Inter-subunit bridging via zinc ions enhances stability, which is crucial as there is no protein turn over in the lens. Interacts with HSPBAP1 and TTN/titin. Interacts with TMEM109; in the cellular response to DNA damage. Interacts with DES; binds rapidly during early stages of DES filament assembly and a reduced binding seen in the later stages. Interacts with TMED10; the interaction mediates the translocation from the cytoplasm into the ERGIC (endoplasmic reticulum-Golgi intermediate compartment) and thereby secretion. Interacts with ATP6V1A and with MTOR, forming a ternary complex. Lens as well as other tissues.

Its subcellular location is the cytoplasm. It localises to the nucleus. The protein resides in the secreted. It is found in the lysosome. Functionally, may contribute to the transparency and refractive index of the lens. Has chaperone-like activity, preventing aggregation of various proteins under a wide range of stress conditions. In lens epithelial cells, stabilizes the ATP6V1A protein, preventing its degradation by the proteasome. The sequence is that of Alpha-crystallin B chain (CRYAB) from Oryctolagus cuniculus (Rabbit).